Here is a 259-residue protein sequence, read N- to C-terminus: DNA repair protein RecO (259 aa).

This sequence belongs to the RecO family.

Functionally, involved in DNA repair and RecF pathway recombination. The sequence is that of DNA repair protein RecO from Rhizobium rhizogenes (strain K84 / ATCC BAA-868) (Agrobacterium radiobacter).